The primary structure comprises 840 residues: Protein translocase subunit SecA (840 aa).

ATP contacts are provided by residues Q85, 103-107, and D492; that span reads GEGKT. The segment at 787-822 is disordered; the sequence is QRERVAKETGASHGGDSQEVKKKPVKKEPKVGRNDL. Positions 802–819 are enriched in basic and acidic residues; sequence DSQEVKKKPVKKEPKVGR. Residues C823, C825, C834, and C835 each contribute to the Zn(2+) site.

It belongs to the SecA family. As to quaternary structure, monomer and homodimer. Part of the essential Sec protein translocation apparatus which comprises SecA, SecYEG and auxiliary proteins SecDF. Other proteins may also be involved. Zn(2+) is required as a cofactor.

The protein resides in the cell membrane. The protein localises to the cytoplasm. The catalysed reaction is ATP + H2O + cellular proteinSide 1 = ADP + phosphate + cellular proteinSide 2.. Part of the Sec protein translocase complex. Interacts with the SecYEG preprotein conducting channel. Has a central role in coupling the hydrolysis of ATP to the transfer of proteins into and across the cell membrane, serving as an ATP-driven molecular motor driving the stepwise translocation of polypeptide chains across the membrane. The protein is Protein translocase subunit SecA of Clostridium perfringens (strain ATCC 13124 / DSM 756 / JCM 1290 / NCIMB 6125 / NCTC 8237 / Type A).